The chain runs to 217 residues: Large ribosomal subunit protein uL3 (217 aa).

The protein belongs to the universal ribosomal protein uL3 family. In terms of assembly, part of the 50S ribosomal subunit. Forms a cluster with proteins L14 and L19.

Its function is as follows. One of the primary rRNA binding proteins, it binds directly near the 3'-end of the 23S rRNA, where it nucleates assembly of the 50S subunit. The chain is Large ribosomal subunit protein uL3 from Mycobacterium marinum (strain ATCC BAA-535 / M).